A 1121-amino-acid chain; its full sequence is Transcription factor CSR2 (1121 aa).

Phosphoserine occurs at positions 23, 46, and 127. 4 disordered regions span residues 273 to 342 (PLHT…RSLP), 513 to 532 (HTQL…PQKL), 579 to 600 (LKRN…GLAM), and 837 to 860 (IPQD…LQTS). Polar residues predominate over residues 276–310 (TQRTSPSNTARTGNAMDTSNSDRASPASNNNTTDA). Composition is skewed to low complexity over residues 318–329 (NNNPMNNNNSPA), 519–529 (SRPRSSSISSP), and 582–597 (NNSN…SSSG). Phosphoserine is present on serine 327. The segment covering 837-846 (IPQDKNHNEV) has biased composition (basic and acidic residues). A Glycyl lysine isopeptide (Lys-Gly) (interchain with G-Cter in ubiquitin) cross-link involves residue lysine 841. The segment covering 847-860 (NDTNGNSNTSLQTS) has biased composition (polar residues). A Phosphoserine modification is found at serine 987. Positions 999 to 1009 (KTTAVSDSSNG) are enriched in polar residues. 2 disordered regions span residues 999-1022 (KTTA…QARP) and 1075-1121 (TPRY…EISS). Positions 1084–1093 (TNTDYNYNDN) are enriched in low complexity.

This sequence belongs to the CSR2 family. Post-translationally, phosphorylated by CDC28.

The protein resides in the cytoplasm. It localises to the nucleus. Functionally, transcription factor involved in the regulation of fermentation and aerobic oxidation. Acts as a repressor of CYC1, which is involved in electron flow through the mitochondria under aerobic condition. Required for pseudohyphal formation upon nitrogen starvation. May be involved in viability at stationary phase and aging. In Saccharomyces cerevisiae (strain ATCC 204508 / S288c) (Baker's yeast), this protein is Transcription factor CSR2 (CSR2).